A 118-amino-acid polypeptide reads, in one-letter code: Large ribosomal subunit protein bL19 (118 aa).

The protein belongs to the bacterial ribosomal protein bL19 family.

In terms of biological role, this protein is located at the 30S-50S ribosomal subunit interface and may play a role in the structure and function of the aminoacyl-tRNA binding site. This Helicobacter acinonychis (strain Sheeba) protein is Large ribosomal subunit protein bL19.